The following is a 323-amino-acid chain: Acetyl-coenzyme A carboxylase carboxyl transferase subunit alpha (323 aa).

The 255-residue stretch at 39 to 293 (RLAGKSQQLT…KRSLAESLRQ (255 aa)) folds into the CoA carboxyltransferase C-terminal domain.

Belongs to the AccA family. As to quaternary structure, acetyl-CoA carboxylase is a heterohexamer composed of biotin carboxyl carrier protein (AccB), biotin carboxylase (AccC) and two subunits each of ACCase subunit alpha (AccA) and ACCase subunit beta (AccD).

It is found in the cytoplasm. It catalyses the reaction N(6)-carboxybiotinyl-L-lysyl-[protein] + acetyl-CoA = N(6)-biotinyl-L-lysyl-[protein] + malonyl-CoA. It participates in lipid metabolism; malonyl-CoA biosynthesis; malonyl-CoA from acetyl-CoA: step 1/1. Component of the acetyl coenzyme A carboxylase (ACC) complex. First, biotin carboxylase catalyzes the carboxylation of biotin on its carrier protein (BCCP) and then the CO(2) group is transferred by the carboxyltransferase to acetyl-CoA to form malonyl-CoA. This Cupriavidus necator (strain ATCC 17699 / DSM 428 / KCTC 22496 / NCIMB 10442 / H16 / Stanier 337) (Ralstonia eutropha) protein is Acetyl-coenzyme A carboxylase carboxyl transferase subunit alpha.